The sequence spans 187 residues: Ion-translocating oxidoreductase complex subunit B (187 aa).

A hydrophobic region spans residues 1–23 (MIAAAASMSALGLGLGYLLGAAA). In terms of domain architecture, 4Fe-4S spans 29 to 88 (ETPPIVEEIAKILPGTNCGACGFPGCNGLAEAMAEGNAPVTACTPGGRDVALALAEIVTV). Positions 46, 49, 54, 71, 112, 115, 118, 122, 142, 145, 148, and 152 each coordinate [4Fe-4S] cluster. 2 consecutive 4Fe-4S ferredoxin-type domains span residues 103–132 (MVAF…GGAK) and 133–162 (QIHT…SRVK).

This sequence belongs to the 4Fe4S bacterial-type ferredoxin family. RnfB subfamily. As to quaternary structure, the complex is composed of six subunits: RnfA, RnfB, RnfC, RnfD, RnfE and RnfG. The cofactor is [4Fe-4S] cluster.

The protein resides in the cellular chromatophore membrane. Functionally, part of a membrane-bound complex that couples electron transfer with translocation of ions across the membrane. Required for nitrogen fixation. Involved in electron transfer to nitrogenase. This Rhodobacter capsulatus (Rhodopseudomonas capsulata) protein is Ion-translocating oxidoreductase complex subunit B.